The primary structure comprises 79 residues: RNA-binding protein Hfq (79 aa).

A Sm domain is found at 10–70 (DAFLNHVRKT…ISTIMPAQPI (61 aa)).

This sequence belongs to the Hfq family. As to quaternary structure, homohexamer.

Its function is as follows. RNA chaperone that binds small regulatory RNA (sRNAs) and mRNAs to facilitate mRNA translational regulation in response to envelope stress, environmental stress and changes in metabolite concentrations. Also binds with high specificity to tRNAs. The polypeptide is RNA-binding protein Hfq (Ruegeria sp. (strain TM1040) (Silicibacter sp.)).